The sequence spans 226 residues: Octanoyltransferase (226 aa).

One can recognise a BPL/LPL catalytic domain in the interval 34-212 (LAAPDVLLTL…AFSRVFGLEF (179 aa)). Residues 76–83 (RGGDVTYH), 143–145 (AIG), and 156–158 (GIA) each bind substrate. Cysteine 174 (acyl-thioester intermediate) is an active-site residue.

Belongs to the LipB family.

It is found in the cytoplasm. It catalyses the reaction octanoyl-[ACP] + L-lysyl-[protein] = N(6)-octanoyl-L-lysyl-[protein] + holo-[ACP] + H(+). Its pathway is protein modification; protein lipoylation via endogenous pathway; protein N(6)-(lipoyl)lysine from octanoyl-[acyl-carrier-protein]: step 1/2. Functionally, catalyzes the transfer of endogenously produced octanoic acid from octanoyl-acyl-carrier-protein onto the lipoyl domains of lipoate-dependent enzymes. Lipoyl-ACP can also act as a substrate although octanoyl-ACP is likely to be the physiological substrate. This Thermosynechococcus vestitus (strain NIES-2133 / IAM M-273 / BP-1) protein is Octanoyltransferase.